Consider the following 155-residue polypeptide: Keratin-associated protein 4-7 (155 aa).

20 tandem repeats follow at residues 5-9 (CCGSV), 24-28 (CCRPS), 29-33 (CCQTT), 34-38 (CCRTT), 44-48 (CCVSS), 49-53 (CCRPQ), 54-58 (CCQSV), 59-63 (CCQPT), 64-68 (CCRPT), 69-73 (CCETT), 74-78 (CCHPR), 79-83 (CCISS), 84-88 (CCRPS), 89-93 (CCMSS), 94-98 (CCKPQ), 99-103 (CCQSV), 104-108 (CCQPT), 109-113 (CCRPS), 114-118 (CCRPC), and 119-123 (CCLRP). Residues 5 to 123 (CCGSVCSDQG…CCRPCCCLRP (119 aa)) are 20 X 5 AA repeats of C-C-[GIKRQVHEML]-[SPTRV]-[STVQRCP].

It belongs to the KRTAP type 4 family. As to quaternary structure, interacts with hair keratins. As to expression, expressed in the hair follicles.

Its function is as follows. In the hair cortex, hair keratin intermediate filaments are embedded in an interfilamentous matrix, consisting of hair keratin-associated proteins (KRTAP), which are essential for the formation of a rigid and resistant hair shaft through their extensive disulfide bond cross-linking with abundant cysteine residues of hair keratins. The matrix proteins include the high-sulfur and high-glycine-tyrosine keratins. The sequence is that of Keratin-associated protein 4-7 (KRTAP4-7) from Homo sapiens (Human).